The following is a 152-amino-acid chain: Natriuretic peptides A (152 aa).

The N-terminal stretch at 1 to 24 (MGSFSITKGFFLFLAFWLPGHIGA) is a signal peptide. Propeptides lie at residues 25–122 (NPVY…AGPR) and 92–102 (DGGALGRGPWD). Residues 54–104 (DEVMPPQALSEQTDEAGAALSSLSEVPPWTGEVNPSQRDGGALGRGPWDPS) are disordered. The residue at position 128 (Ser128) is a Phosphoserine. A disulfide bridge links Cys129 with Cys145. Positions 146–150 (NSFRY) are important for degradation of atrial natriuretic peptide by IDE.

The protein belongs to the natriuretic peptide family. In terms of assembly, homodimer; disulfide-linked antiparallel dimer. In terms of processing, the precursor molecule is proteolytically cleaved by CORIN at Arg-122 to produce the atrial natriuretic peptide. Undergoes further proteolytic cleavage by unknown proteases to give rise to long-acting natriuretic peptide, vessel dilator and kaliuretic peptide. Additional processing gives rise to the auriculin and atriopeptin peptides. In the kidneys, alternative processing by an unknown protease results in the peptide urodilatin. Post-translationally, cleavage by MME initiates degradation of the factor and thereby regulates its activity. Degradation by IDE results in reduced activation of NPR1 (in vitro). During IDE degradation, the resulting products can temporarily stimulate NPR2 to produce cGMP, before the fragments are completely degraded and inactivated by IDE (in vitro). Degraded by IDE. In terms of processing, phosphorylation on Ser-128 decreases vasorelaxant activity. In terms of tissue distribution, high levels of expression in the atria compared to the ventricles. Very low levels of expression detected in extracardiac tissues such as the brain, hypothalamus, pituitary, lung and aorta. Atria (at protein level). As to expression, high levels of expression in the atria with very low levels of expression in the ventricles (at protein level). Relatively low levels of expression detected in the brain compared to the atria (at protein level).

The protein resides in the secreted. The protein localises to the perikaryon. Its subcellular location is the cell projection. In terms of biological role, hormone that plays a key role in mediating cardio-renal homeostasis, and is involved in vascular remodeling and regulating energy metabolism. Acts by specifically binding and stimulating NPR1 to produce cGMP, which in turn activates effector proteins, such as PRKG1, that drive various biological responses. Regulates vasodilation, natriuresis, diuresis and aldosterone synthesis and is therefore essential for regulating blood pressure, controlling the extracellular fluid volume and maintaining the fluid-electrolyte balance. Also involved in inhibiting cardiac remodeling and cardiac hypertrophy by inducing cardiomyocyte apoptosis and attenuating the growth of cardiomyocytes and fibroblasts. Plays a role in female pregnancy by promoting trophoblast invasion and spiral artery remodeling in uterus, and thus prevents pregnancy-induced hypertension. In adipose tissue, acts in various cGMP- and PKG-dependent pathways to regulate lipid metabolism and energy homeostasis. This includes up-regulating lipid metabolism and mitochondrial oxygen utilization by activating the AMP-activated protein kinase (AMPK), and increasing energy expenditure by acting via MAPK11 to promote the UCP1-dependent thermogenesis of brown adipose tissue. Binds the clearance receptor NPR3 which removes the hormone from circulation. May have a role in cardio-renal homeostasis through regulation of natriuresis, diuresis, vasodilation, and inhibiting aldosterone synthesis. In vitro, promotes the production of cGMP and induces vasodilation. May promote natriuresis, at least in part, by enhancing prostaglandin E2 synthesis resulting in the inhibition of renal Na+-K+-ATPase. However reports on the involvement of this peptide in mammal blood volume and blood pressure homeostasis are conflicting; according to a report, in vivo it is not sufficient to activate cGMP and does not inhibit collecting duct transport nor effect diuresis and natriuresis. Appears to bind to specific receptors that are distinct from the receptors bound by atrial natriuretic peptide and vessel dilator. Possibly enhances protein excretion in urine by decreasing proximal tubular protein reabsorption. Functionally, may have a role in cardio-renal homeostasis through regulation of natriuresis, diuresis, and vasodilation. In vitro, promotes the production of cGMP and induces vasodilation. May promote natriuresis, at least in part, by enhancing prostaglandin E2 synthesis resulting in the inhibition of renal Na+-K+-ATPase. However reports on the involvement of this peptide in mammal blood volume and blood pressure homeostasis are conflicting; according to a report, in vivo it is not sufficient to activate cGMP and does not inhibit collecting duct transport nor effect diuresis and natriuresis. Appears to bind to specific receptors that are distinct from the receptors bound by the atrial natriuretic and long-acting natriuretic peptides. Possibly functions in protein excretion in urine by maintaining the integrity of the proximal tubules and enhancing protein excretion by decreasing proximal tubular protein reabsorption. Its function is as follows. May have a role in cardio-renal homeostasis through regulation of diuresis and inhibiting aldosterone synthesis. In vitro, promotes the production of cGMP and induces vasodilation. May promote natriuresis, at least in part, by enhancing prostaglandin E2 synthesis resulting in the inhibition of renal Na+-K+-ATPase. May have a role in potassium excretion but not sodium excretion (natriuresis). Possibly enhances protein excretion in urine by decreasing proximal tubular protein reabsorption. In terms of biological role, hormone produced in the kidneys that appears to be important for maintaining cardio-renal homeostasis. Mediates vasodilation, natriuresis and diuresis primarily in the renal system, in order to maintain the extracellular fluid volume and control the fluid-electrolyte balance. Specifically binds and stimulates cGMP production by renal transmembrane receptors, likely NPR1. Urodilatin not ANP, may be the natriuretic peptide responsible for the regulation of sodium and water homeostasis in the kidney. May have a role in cardio-renal homeostasis through regulation of natriuresis and vasodilation. In vivo promotes natriuresis and in vitro, vasodilates renal artery strips. Functionally, may have a role in cardio-renal homeostasis through regulation of regulation of natriuresis and vasodilation. In vivo promotes natriuresis. In vitro, vasodilates intestinal smooth muscle but not smooth muscle strips. Its function is as follows. May have a role in cardio-renal homeostasis through regulation of natriuresis and vasodilation. In vivo promotes natriuresis. In vitro, selectively vasodilates intestinal and vascular smooth muscle strips. In terms of biological role, may have a role in cardio-renal homeostasis through regulation of natriuresis and vasodilation. In vivo promotes natriuresis. In vitro, selectively vasodilates intestinal smooth muscle but not vascular smooth muscle strips. This Rattus norvegicus (Rat) protein is Natriuretic peptides A (Nppa).